We begin with the raw amino-acid sequence, 791 residues long: von Willebrand factor A domain-containing protein 2 (791 aa).

Residues Met1 to Ser23 form the signal peptide. Residues Asp51–Leu221 enclose the VWFA 1 domain. The N-linked (GlcNAc...) asparagine glycan is linked to Asn146. The region spanning Pro295–Ala332 is the EGF-like 1 domain. 3 disulfides stabilise this stretch: Cys298–Cys309, Cys303–Cys319, and Cys321–Cys331. 2 VWFA domains span residues Asp342–Leu516 and Asp530–Leu704. The region spanning Pro711–Glu747 is the EGF-like 2 domain. Intrachain disulfides connect Cys715-Cys726, Cys720-Cys735, and Cys737-Cys746. Residues His762 to Lys791 form a disordered region.

As to quaternary structure, forms monomers and multimers. In terms of tissue distribution, detected in uterus, kidney, and skin. Also detected in intestine and lung of adult mice, and in calvaria, femur, brain, heart, intestine, skeletal muscle, and lung of newborn mice.

The protein localises to the secreted. The sequence is that of von Willebrand factor A domain-containing protein 2 (Vwa2) from Mus musculus (Mouse).